A 576-amino-acid polypeptide reads, in one-letter code: Aspartate--tRNA ligase (576 aa).

Residue glutamate 171 coordinates L-aspartate. The interval 195–198 (QLFK) is aspartate. Arginine 217 contacts L-aspartate. Residues 217–219 (RDE) and glutamine 226 contribute to the ATP site. L-aspartate is bound at residue histidine 450. Glutamate 484 contacts ATP. Arginine 491 lines the L-aspartate pocket. 536-539 (GLDR) is a binding site for ATP.

The protein belongs to the class-II aminoacyl-tRNA synthetase family. Type 1 subfamily. As to quaternary structure, homodimer.

It localises to the cytoplasm. It catalyses the reaction tRNA(Asp) + L-aspartate + ATP = L-aspartyl-tRNA(Asp) + AMP + diphosphate. Catalyzes the attachment of L-aspartate to tRNA(Asp) in a two-step reaction: L-aspartate is first activated by ATP to form Asp-AMP and then transferred to the acceptor end of tRNA(Asp). The polypeptide is Aspartate--tRNA ligase (Buchnera aphidicola subsp. Baizongia pistaciae (strain Bp)).